The chain runs to 102 residues: Small ribosomal subunit protein uS10 (102 aa).

Belongs to the universal ribosomal protein uS10 family. Part of the 30S ribosomal subunit.

In terms of biological role, involved in the binding of tRNA to the ribosomes. The chain is Small ribosomal subunit protein uS10 from Methylobacterium radiotolerans (strain ATCC 27329 / DSM 1819 / JCM 2831 / NBRC 15690 / NCIMB 10815 / 0-1).